A 382-amino-acid chain; its full sequence is Nonsense-mediated mRNA decay factor SMG9 (382 aa).

A disordered region spans residues 1–66 (MKKVEILKTP…PDSSVSKSSG (66 aa)).

The protein belongs to the SMG9 family.

Involved in nonsense-mediated decay (NMD) of mRNAs containing premature stop codons. Probable component of kinase complex containing smg-1 and recruited to stalled ribosomes. The chain is Nonsense-mediated mRNA decay factor SMG9 (smg-9) from Caenorhabditis briggsae.